The primary structure comprises 607 residues: CUB and zona pellucida-like domain-containing protein 1 (607 aa).

The first 19 residues, 1 to 19 (MEVTGRLFIWAILAVSCRA), serve as a signal peptide directing secretion. Residues 20–568 (QLNSTAAEGR…AEISKQPLSH (549 aa)) are Lumenal-facing. Residue Asn-22 is glycosylated (N-linked (GlcNAc...) asparagine). Cys-32 and Cys-58 are joined by a disulfide. CUB domains follow at residues 32 to 146 (CTAS…YFFS) and 154 to 265 (CGGY…YAST). N-linked (GlcNAc...) asparagine glycosylation occurs at Asn-67. Cystine bridges form between Cys-85/Cys-107 and Cys-154/Cys-180. A glycan (N-linked (GlcNAc...) asparagine) is linked at Asn-195. Cysteines 207 and 229 form a disulfide. The region spanning 276–519 (SCASDKMRVI…SRCNQGCVSR (244 aa)) is the ZP domain. Asn-419 carries an N-linked (GlcNAc...) asparagine glycan. Residues Cys-442 and Cys-498 are joined by a disulfide bond. Residues 569–589 (LHLFSFMVLALNVVIVVTATV) form a helical membrane-spanning segment. At 590-607 (RHFLNRWKDHGYQKLQVY) the chain is on the cytoplasmic side.

Expressed predominantly in epithelium of uterus and oviduct.

The protein resides in the zymogen granule membrane. In terms of biological role, localized to zymogen granules, where it functions in trypsinogen activation. May indirectly regulate cell motility, cell-cell and cell/extracellular matrix interactions. In Rattus norvegicus (Rat), this protein is CUB and zona pellucida-like domain-containing protein 1.